We begin with the raw amino-acid sequence, 765 residues long: Probable ATP-dependent RNA helicase DDX27 (765 aa).

Serine 23, serine 25, and serine 48 each carry phosphoserine. A compositionally biased stretch (acidic residues) spans 43-63 (LGKNRSADFNPDFVFTEKEGT). Disordered regions lie at residues 43 to 83 (LGKN…KRAA) and 111 to 179 (KEKE…FFED). Residues 55–57 (FVF) carry the Required for interaction with the PEBOW complex motif. Residues 129–156 (ENDEEGSEDEASETDYSSADENILTKAD) are compositionally biased toward basic and acidic residues. Residues serine 135 and serine 146 each carry the phosphoserine modification. A compositionally biased stretch (acidic residues) spans 157-172 (TLKVKDRKKKKKKGQE). The Nuclear localization signal signature appears at 164 to 169 (KKKKKK). The Q motif signature appears at 187 to 215 (LSFQDMNLSRPLLKAITAMGFKQPTPIQK). The Helicase ATP-binding domain maps to 218 to 392 (IPVGLLGKDI…SVSLKNPVRI (175 aa)). 231 to 238 (AATGTGKT) contacts ATP. Positions 340–343 (DEAD) match the DEAD box motif. Residues 426-572 (LLTRTFTDHV…DVILKFRDKI (147 aa)) enclose the Helicase C-terminal domain. Residues 716-725 (VFDEELTNTS) show a composition bias toward basic residues.

The protein belongs to the DEAD box helicase family. DDX27/DRS1 subfamily. As to quaternary structure, associates with PeBoW complex, composed of BOP1, PES1 and WDR12. Interacts directly with BOP1 and PES1.

Its subcellular location is the nucleus. It is found in the nucleolus. The protein localises to the chromosome. The enzyme catalyses ATP + H2O = ADP + phosphate + H(+). In terms of biological role, probable ATP-dependent RNA helicase. Component of the nucleolar ribosomal RNA (rRNA) processing machinery that regulates 3' end formation of ribosomal 47S rRNA. This Homo sapiens (Human) protein is Probable ATP-dependent RNA helicase DDX27 (DDX27).